A 549-amino-acid polypeptide reads, in one-letter code: Membrane protein insertase YidC (549 aa).

A helical membrane pass occupies residues 8-28; that stretch reads VLLATVLSVAVLIVWQFVFPS. Residues 29–39 show a composition bias toward pro residues; that stretch reads PKPKPQPPKPP. Residues 29-68 form a disordered region; sequence PKPKPQPPKPPEAAQRAEAPAAPAPGQPAAQAPAPAVPQD. Low complexity-rich tracts occupy residues 40-49 and 55-68; these read EAAQRAEAPA and QPAAQAPAPAVPQD. 4 helical membrane passes run 328 to 348, 354 to 374, 424 to 444, and 502 to 522; these read IDYGAMARPFAFFARLLLFVM, LVANWGLAIILLTVLVKVLLY, LGGCLPMLIQLPIWFALYATL, and PGFFTLLMLSVPAGLTLYIFV.

The protein belongs to the OXA1/ALB3/YidC family. Type 1 subfamily. Interacts with the Sec translocase complex via SecD. Specifically interacts with transmembrane segments of nascent integral membrane proteins during membrane integration.

The protein resides in the cell inner membrane. In terms of biological role, required for the insertion and/or proper folding and/or complex formation of integral membrane proteins into the membrane. Involved in integration of membrane proteins that insert both dependently and independently of the Sec translocase complex, as well as at least some lipoproteins. Aids folding of multispanning membrane proteins. This is Membrane protein insertase YidC from Anaeromyxobacter sp. (strain Fw109-5).